The sequence spans 248 residues: Carbohydrate deacetylase 2 (248 aa).

Positions 59 and 123 each coordinate Mg(2+).

The protein belongs to the YdjC deacetylase family. Homodimer. It depends on Mg(2+) as a cofactor.

In terms of biological role, probably catalyzes the deacetylation of acetylated carbohydrates an important step in the degradation of oligosaccharides. The chain is Carbohydrate deacetylase 2 from Listeria innocua serovar 6a (strain ATCC BAA-680 / CLIP 11262).